A 129-amino-acid chain; its full sequence is Glycine cleavage system H protein (129 aa).

One can recognise a Lipoyl-binding domain in the interval 24-106; the sequence is EAVVGITEHA…YGAGWLFRIK (83 aa). K65 carries the post-translational modification N6-lipoyllysine.

Belongs to the GcvH family. In terms of assembly, the glycine cleavage system is composed of four proteins: P, T, L and H. Requires (R)-lipoate as cofactor.

Functionally, the glycine cleavage system catalyzes the degradation of glycine. The H protein shuttles the methylamine group of glycine from the P protein to the T protein. This chain is Glycine cleavage system H protein, found in Aeromonas hydrophila subsp. hydrophila (strain ATCC 7966 / DSM 30187 / BCRC 13018 / CCUG 14551 / JCM 1027 / KCTC 2358 / NCIMB 9240 / NCTC 8049).